The following is a 500-amino-acid chain: MNISTLRLDSNPITTATATHRNGILGCNGTYSCRFNQFQQRKKTPSVIVCSTKPLASVVDHQGVNESGLSRIESLSQVSGVLGCQWGDEGKGKLVDILAKHFDIVARCQGGANAGHTIYNSEGKKFALHLVPSGILNEETLCVIGNGVVVHLPGLFKEIDGLEANGVSCQGRILVSDRAHLLFDFHQEIDGLREAELAKSFIGTTKRGIGPCYSSKVIRNGLRVSDLRHMDIFPQKLDLLLSDAAARFPGFKYGPDMLREEVERYKKFAERLEPFVADTVHFMNDAISQKKKILVEGGQATMLDIDFGTYPFVTSSSPSAGGICTGLGIAPRVVGDLVGVVKAYTTRVGSGPFPTEIMDKGGDLLRFAGQEFGTTTGRPRRCGWLDIVALRFCCQINGFASLNLTKLDVLSDLPEIQLGVTYRHPDGSALNSFPSDLRLLEQIKVEYEVLPGWKSDISSIRKYTDLPKAAREYVERIEELIGVPIHYIGIGPGRDALIYK.

Residues 87–93 and 115–117 contribute to the GTP site; these read GDEGKGK and GHT. Aspartate 88 acts as the Proton acceptor in catalysis. Mg(2+)-binding residues include aspartate 88 and glycine 115. IMP-binding positions include 88 to 91, 113 to 116, threonine 205, arginine 219, glutamine 299, threonine 314, and arginine 378; these read DEGK and NAGH. Histidine 116 (proton donor) is an active-site residue. 374–380 serves as a coordination point for substrate; it reads TTTGRPR. GTP-binding positions include arginine 380, 406–408, and 489–491; these read KLD and GIG.

The protein belongs to the adenylosuccinate synthetase family. As to quaternary structure, homodimer. The cofactor is Mg(2+).

The protein resides in the plastid. The protein localises to the chloroplast. The catalysed reaction is IMP + L-aspartate + GTP = N(6)-(1,2-dicarboxyethyl)-AMP + GDP + phosphate + 2 H(+). The protein operates within purine metabolism; AMP biosynthesis via de novo pathway; AMP from IMP: step 1/2. In terms of biological role, plays an important role in the de novo pathway and in the salvage pathway of purine nucleotide biosynthesis. Catalyzes the first committed step in the biosynthesis of AMP from IMP. This is Adenylosuccinate synthetase, chloroplastic from Solanum bulbocastanum (Wild potato).